The following is a 1217-amino-acid chain: Myosin-5 (1217 aa).

The segment covering 1-11 has biased composition (basic residues); the sequence is MAILKRGARNK. A disordered region spans residues 1-24; it reads MAILKRGARNKTHQEPAKRGGNNI. The Myosin motor domain occupies 37 to 716; it reads VGVSDLTLLT…TLFALENMRD (680 aa). ATP is bound at residue 130-137; that stretch reads GESGAGKT. Phosphoserine is present on Ser358. Residues 405-487 are actin-binding; the sequence is SIGILDIYGF…PGIFAAMNDS (83 aa). 2 consecutive IQ domains span residues 720–740 and 741–766; these read HNMA…RIDA and AVKI…YGTS. One can recognise a TH1 domain in the interval 772–962; the sequence is KERRSMSLLG…TIFVRRGNPA (191 aa). Disordered stretches follow at residues 956–1102, 1145–1174, and 1197–1217; these read VRRG…NPSE, GAKA…AQTV, and NKMR…DDDW. Residues 965-974 show a composition bias toward basic residues; that stretch reads KSKKKPRKKS. A compositionally biased stretch (polar residues) spans 976-987; that stretch reads GMSAPTTQSSKT. A compositionally biased stretch (low complexity) spans 994–1007; the sequence is SSNNQNTTVSQSLN. Pro residues predominate over residues 1025 to 1038; it reads PAPPPPGSKKPAPQ. The span at 1050–1071 shows a compositional bias: low complexity; that stretch reads PQAQMQTQTQIPASQSSATQSS. Positions 1072 to 1081 are enriched in pro residues; sequence IPPPPPPPPS. An SH3 domain is found at 1083–1145; the sequence is TSEPQFEAAY…PTAYMVKHEG (63 aa). Polar residues predominate over residues 1162–1174; that stretch reads IQNQSQPASAQTV. The span at 1203–1217 shows a compositional bias: acidic residues; sequence SDEEAAASSDNDDDW.

This sequence belongs to the TRAFAC class myosin-kinesin ATPase superfamily. Myosin family. In terms of processing, phosphorylation of the TEDS site (Ser-358) is required for the polarization of the actin cytoskeleton. Phosphorylation probably activates the myosin-I ATPase activity.

Its subcellular location is the cytoplasm. It is found in the cytoskeleton. The protein localises to the actin patch. Functionally, type-I myosin implicated in the organization of the actin cytoskeleton. Required for proper actin cytoskeleton polarization. At the cell cortex, assembles in patch-like structures together with proteins from the actin-polymerizing machinery and promotes actin assembly. Functions as actin nucleation-promoting factor (NPF) for the Arp2/3 complex. The chain is Myosin-5 (MYO5) from Candida glabrata (strain ATCC 2001 / BCRC 20586 / JCM 3761 / NBRC 0622 / NRRL Y-65 / CBS 138) (Yeast).